Consider the following 260-residue polypeptide: LKIAAFNIRTFGETKMSNATLSSYIVRILRRYDIALIEQVRDSHLVAVGKLLDDLNQDDPNSYHYVVSEPLGRNSYKERYLFVFRPNKVSVLDTYQYDDGCESCGNDSFSREPAVVKFSSPSTKVKAFAIVPLHSAPSDAVAEINSLYDVYLDVQQKWDLNDIMLMGDFNADCSYVTSSQWSSIRLRTSSTFQWLIPDSADTTATSTNCAYDRIVVAGSLLQSSVVGPSAVPFDFQAAYGLSNEMALAISDHYPVEVTLT.

An N-linked (GlcNAc...) asparagine glycan is attached at Asn18. Glu78 is a catalytic residue. A disulfide bond links Cys101 and Cys104. Residue His134 is part of the active site. A disulfide bridge links Cys173 with Cys209.

Belongs to the DNase I family. Ca(2+) serves as cofactor. It depends on Mg(2+) as a cofactor.

It is found in the secreted. It localises to the zymogen granule. The protein localises to the nucleus envelope. The enzyme catalyses Endonucleolytic cleavage to 5'-phosphodinucleotide and 5'-phosphooligonucleotide end-products.. Functionally, serum endocuclease secreted into body fluids by a wide variety of exocrine and endocrine organs. Expressed by non-hematopoietic tissues and preferentially cleaves protein-free DNA. Among other functions, seems to be involved in cell death by apoptosis. Binds specifically to G-actin and blocks actin polymerization. Together with DNASE1L3, plays a key role in degrading neutrophil extracellular traps (NETs). NETs are mainly composed of DNA fibers and are released by neutrophils to bind pathogens during inflammation. Degradation of intravascular NETs by DNASE1 and DNASE1L3 is required to prevent formation of clots that obstruct blood vessels and cause organ damage following inflammation. The chain is Deoxyribonuclease-1 (DNASE1) from Ovis aries (Sheep).